The chain runs to 32 residues: Photosystem I reaction center subunit XII (32 aa).

Residues 10 to 27 form a helical membrane-spanning segment; the sequence is VVALISALVTGILALRLG.

This sequence belongs to the PsaM family.

Its subcellular location is the plastid. The protein localises to the chloroplast thylakoid membrane. The chain is Photosystem I reaction center subunit XII from Zygnema circumcarinatum (Green alga).